The following is a 278-amino-acid chain: MRLKHPTARLALAALLVAVPRSVAAAGTVHAAPAPAGATRLAAVGLDDPHKKDIAMQLVSSAENSSLDWKSQYKYIEDIKDGRGYTAGIIGFCSGTGDMLDLVADYTDLKPGNILAKYLPALRKVNGTESHAGLASAFEKDWATAAKDSVFQQAQNDERDRSYFNPAVNQAKASLRALGQFAYYDAIVMHGPGDSSDSFGGIRKAAMKKAKTPAQGRDEATYLKAFLAARKTVMLKEEAHSDTSRVDTEQTVFLNAKNFDLNPPLKWKVYGDSYAINS.

The N-terminal stretch at 1–41 is a signal peptide; sequence MRLKHPTARLALAALLVAVPRSVAAAGTVHAAPAPAGATRL. Glu63 acts as the Proton donor in catalysis. Asp81 acts as the Nucleophile in catalysis.

It belongs to the glycosyl hydrolase 46 family.

The protein resides in the secreted. The enzyme catalyses Endohydrolysis of beta-(1-&gt;4)-linkages between D-glucosamine residues in a partly acetylated chitosan.. Its function is as follows. Aids in the defense against invading fungal pathogens by degrading their cell wall chitosan. This is Chitosanase (csn) from Nocardioides sp. (strain N106).